Consider the following 427-residue polypeptide: Glutamate-1-semialdehyde 2,1-aminomutase (427 aa).

Lysine 267 carries the post-translational modification N6-(pyridoxal phosphate)lysine.

It belongs to the class-III pyridoxal-phosphate-dependent aminotransferase family. HemL subfamily. In terms of assembly, homodimer. The cofactor is pyridoxal 5'-phosphate.

The protein localises to the cytoplasm. The catalysed reaction is (S)-4-amino-5-oxopentanoate = 5-aminolevulinate. It participates in porphyrin-containing compound metabolism; protoporphyrin-IX biosynthesis; 5-aminolevulinate from L-glutamyl-tRNA(Glu): step 2/2. The protein is Glutamate-1-semialdehyde 2,1-aminomutase of Syntrophotalea carbinolica (strain DSM 2380 / NBRC 103641 / GraBd1) (Pelobacter carbinolicus).